An 83-amino-acid chain; its full sequence is Cytochrome b559 subunit alpha (83 aa).

Residues 21–35 (VIHSITIPSLFIAGW) form a helical membrane-spanning segment. Residue histidine 23 coordinates heme.

It belongs to the PsbE/PsbF family. As to quaternary structure, heterodimer of an alpha subunit and a beta subunit. PSII is composed of 1 copy each of membrane proteins PsbA, PsbB, PsbC, PsbD, PsbE, PsbF, PsbH, PsbI, PsbJ, PsbK, PsbL, PsbM, PsbT, PsbX, PsbY, PsbZ, Psb30/Ycf12, at least 3 peripheral proteins of the oxygen-evolving complex and a large number of cofactors. It forms dimeric complexes. Heme b serves as cofactor.

It localises to the plastid. It is found in the chloroplast thylakoid membrane. This b-type cytochrome is tightly associated with the reaction center of photosystem II (PSII). PSII is a light-driven water:plastoquinone oxidoreductase that uses light energy to abstract electrons from H(2)O, generating O(2) and a proton gradient subsequently used for ATP formation. It consists of a core antenna complex that captures photons, and an electron transfer chain that converts photonic excitation into a charge separation. This chain is Cytochrome b559 subunit alpha, found in Panax ginseng (Korean ginseng).